The chain runs to 490 residues: Aspartyl/glutamyl-tRNA(Asn/Gln) amidotransferase subunit B (490 aa).

It belongs to the GatB/GatE family. GatB subfamily. In terms of assembly, heterotrimer of A, B and C subunits.

The enzyme catalyses L-glutamyl-tRNA(Gln) + L-glutamine + ATP + H2O = L-glutaminyl-tRNA(Gln) + L-glutamate + ADP + phosphate + H(+). It carries out the reaction L-aspartyl-tRNA(Asn) + L-glutamine + ATP + H2O = L-asparaginyl-tRNA(Asn) + L-glutamate + ADP + phosphate + 2 H(+). Allows the formation of correctly charged Asn-tRNA(Asn) or Gln-tRNA(Gln) through the transamidation of misacylated Asp-tRNA(Asn) or Glu-tRNA(Gln) in organisms which lack either or both of asparaginyl-tRNA or glutaminyl-tRNA synthetases. The reaction takes place in the presence of glutamine and ATP through an activated phospho-Asp-tRNA(Asn) or phospho-Glu-tRNA(Gln). This Methylorubrum populi (strain ATCC BAA-705 / NCIMB 13946 / BJ001) (Methylobacterium populi) protein is Aspartyl/glutamyl-tRNA(Asn/Gln) amidotransferase subunit B.